We begin with the raw amino-acid sequence, 443 residues long: Regulator of sigma E protease (443 aa).

His-21 contributes to the Zn(2+) binding site. Residue Glu-22 is part of the active site. Residue His-25 participates in Zn(2+) binding. A helical membrane pass occupies residues 98–118; sequence FVIIAGPLANFIFAIFAYWVI. PDZ domains follow at residues 106–185 and 198–287; these read ANFI…SPFN and NWTF…TPVR. 2 helical membrane-spanning segments follow: residues 369–389 and 423–443; these read LVYFLSFMALISVNLGIMNLF and IGAALLLSLTVFALFNDFLRL.

The protein belongs to the peptidase M50B family. As to quaternary structure, interacts with RseA. Zn(2+) serves as cofactor.

Its subcellular location is the cell inner membrane. A site-2 regulated intramembrane protease (S2P) that cleaves a peptide bond in the transmembrane region of RseA. Part of a regulated intramembrane proteolysis (RIP) cascade. Acts on DegS-cleaved RseA to release the cytoplasmic domain of RseA. This provides the cell with sigma-E (RpoE) activity through the proteolysis of RseA. The polypeptide is Regulator of sigma E protease (rsep) (Haemophilus influenzae (strain ATCC 51907 / DSM 11121 / KW20 / Rd)).